The chain runs to 1912 residues: Vitellogenin-1 (1912 aa).

Residues 1 to 15 (MRGLISALVLTLVGS) form the signal peptide. Residues 24–663 (FGENKVYTYN…AGSLIPTMAV (640 aa)) form the Vitellogenin domain. N-linked (GlcNAc...) asparagine glycosylation occurs at N163. The disordered stretch occupies residues 948–972 (DSASGETDNIRDRQSVEDVSSGNSF). N-linked (GlcNAc...) asparagine glycosylation occurs at N991. Disordered stretches follow at residues 1080–1329 (KILD…SYDI) and 1351–1432 (HWHS…RERN). 2 stretches are compositionally biased toward low complexity: residues 1092–1124 (NSRSSSSSASSISESSESTTSTPSSSDSDNRAS) and 1150–1235 (SSSS…SSSK). N1206 carries N-linked (GlcNAc...) asparagine glycosylation. The segment covering 1259-1269 (EGERSVHEQKQ) has biased composition (basic and acidic residues). Low complexity predominate over residues 1273 to 1299 (SSSSSSSRASSNSRSTSSSTSSSSESS). Positions 1306 to 1316 (WKQDREAETKR) are enriched in basic and acidic residues. Polar residues predominate over residues 1319 to 1328 (SQFNSHSSYD). A compositionally biased stretch (low complexity) spans 1357 to 1381 (RTSSSSSSSSSESGSSHSNSSSSDS). A glycan (N-linked (GlcNAc...) asparagine) is linked at N1375. Residues 1397–1409 (SHRHGEKAAHSSR) show a composition bias toward basic residues. The VWFD domain occupies 1640–1818 (STCEVSKGDF…SWVLLEETCS (179 aa)). Intrachain disulfides connect C1642–C1781 and C1665–C1817. N1662, N1698, and N1703 each carry an N-linked (GlcNAc...) asparagine glycan.

Post-translationally, phosvitin, an egg yolk storage protein, is one of the most highly phosphorylated (10%) proteins in nature. In terms of processing, cathepsin D is responsible for intraoocytic processing of vitellogenin. May contain intrachain disulfide bonds. As to expression, produced by the liver, secreted into the blood and then sequestered by receptor mediated endocytosis into growing oocytes, where it is generally cleaved, giving rise to the respective yolk components.

Functionally, precursor of the egg-yolk proteins that are sources of nutrients during early development of oviparous organisms. In terms of biological role, phosvitin is believed to be of importance in sequestering calcium, iron and other cations for the developing embryo. The sequence is that of Vitellogenin-1 (VTG1) from Gallus gallus (Chicken).